The sequence spans 473 residues: Sensor histidine kinase YclK (473 aa).

The Cytoplasmic segment spans residues M1–Q9. Residues L10–S30 form a helical membrane-spanning segment. Residues H31–N164 are Extracellular-facing. The chain crosses the membrane as a helical span at residues L165–L185. Residues S186 to Q473 lie on the Cytoplasmic side of the membrane. One can recognise an HAMP domain in the interval K187–D239. The region spanning D254–A470 is the Histidine kinase domain. At H257 the chain carries Phosphohistidine; by autocatalysis.

Its subcellular location is the cell membrane. The catalysed reaction is ATP + protein L-histidine = ADP + protein N-phospho-L-histidine.. Could be member of the two-component regulatory system YclK/YclJ. Potentially phosphorylates YclJ. This chain is Sensor histidine kinase YclK (yclK), found in Bacillus subtilis (strain 168).